Consider the following 303-residue polypeptide: N-acetyl-D-glucosamine kinase (303 aa).

Residues 4-11 and 133-140 each bind ATP; these read GFDVGGTK and GFGGGLIY. Residues His157, Cys177, Cys179, and Cys184 each contribute to the Zn(2+) site.

The protein belongs to the ROK (NagC/XylR) family. NagK subfamily.

The enzyme catalyses N-acetyl-D-glucosamine + ATP = N-acetyl-D-glucosamine 6-phosphate + ADP + H(+). Its pathway is cell wall biogenesis; peptidoglycan recycling. Functionally, catalyzes the phosphorylation of N-acetyl-D-glucosamine (GlcNAc) derived from cell-wall degradation, yielding GlcNAc-6-P. In Vibrio vulnificus (strain CMCP6), this protein is N-acetyl-D-glucosamine kinase.